The sequence spans 420 residues: MSLLNTPLHELDPDVAAAVDAELDRQQSTLEMIASENFAPVAVMEAQGSVLTNKYAEGYPGRRYYGGCEHVDVVEQIAIDRVKALFGAEHANVQPHSGAQANAAAMFALLKPGDTIMGLNLAHGGHLTHGMKINFSGKLYNVVPYHVGDDGQVDMAEVERLAKETKPKLIVAGWSAYPRQLDFAAFRKVADEVGAYLMVDMAHFAGLVAAGLHPNPVPHAHVVTTTTHKTLGGPRGGVILSTAELAKKINSAVFPGQQGGPLEHVVAAKAVAFKVAASEDFKERQGRTLEGARILAERLVRDDAKAAGVSVLTGGTDVHLVLVDLRDSELDGQQAEDRLHEVGITVNRNAVPNDPRPPMVTSGLRIGTPALATRGFTAEDFAEVADVIAEALKPSYDAEALKARVKTLADKHPLYPGLNK.

Residues Leu-121 and Gly-125 to Leu-127 contribute to the (6S)-5,6,7,8-tetrahydrofolate site. Residue Lys-229 is modified to N6-(pyridoxal phosphate)lysine.

It belongs to the SHMT family. Homodimer. Pyridoxal 5'-phosphate serves as cofactor.

The protein localises to the cytoplasm. The enzyme catalyses (6R)-5,10-methylene-5,6,7,8-tetrahydrofolate + glycine + H2O = (6S)-5,6,7,8-tetrahydrofolate + L-serine. Its pathway is one-carbon metabolism; tetrahydrofolate interconversion. It functions in the pathway amino-acid biosynthesis; glycine biosynthesis; glycine from L-serine: step 1/1. Its function is as follows. Catalyzes the reversible interconversion of serine and glycine with tetrahydrofolate (THF) serving as the one-carbon carrier. This reaction serves as the major source of one-carbon groups required for the biosynthesis of purines, thymidylate, methionine, and other important biomolecules. Also exhibits THF-independent aldolase activity toward beta-hydroxyamino acids, producing glycine and aldehydes, via a retro-aldol mechanism. The sequence is that of Serine hydroxymethyltransferase from Streptomyces coelicolor (strain ATCC BAA-471 / A3(2) / M145).